The sequence spans 429 residues: Glutamate-1-semialdehyde 2,1-aminomutase 2 (429 aa).

N6-(pyridoxal phosphate)lysine is present on lysine 268.

Belongs to the class-III pyridoxal-phosphate-dependent aminotransferase family. HemL subfamily. In terms of assembly, homodimer. Pyridoxal 5'-phosphate serves as cofactor.

The protein resides in the cytoplasm. The catalysed reaction is (S)-4-amino-5-oxopentanoate = 5-aminolevulinate. It functions in the pathway porphyrin-containing compound metabolism; protoporphyrin-IX biosynthesis; 5-aminolevulinate from L-glutamyl-tRNA(Glu): step 2/2. This is Glutamate-1-semialdehyde 2,1-aminomutase 2 from Staphylococcus epidermidis (strain ATCC 35984 / DSM 28319 / BCRC 17069 / CCUG 31568 / BM 3577 / RP62A).